The sequence spans 245 residues: 1-(5-phosphoribosyl)-5-[(5-phosphoribosylamino)methylideneamino] imidazole-4-carboxamide isomerase (245 aa).

Residue Asp7 is the Proton acceptor of the active site. Asp129 acts as the Proton donor in catalysis.

It belongs to the HisA/HisF family.

The protein localises to the cytoplasm. It catalyses the reaction 1-(5-phospho-beta-D-ribosyl)-5-[(5-phospho-beta-D-ribosylamino)methylideneamino]imidazole-4-carboxamide = 5-[(5-phospho-1-deoxy-D-ribulos-1-ylimino)methylamino]-1-(5-phospho-beta-D-ribosyl)imidazole-4-carboxamide. Its pathway is amino-acid biosynthesis; L-histidine biosynthesis; L-histidine from 5-phospho-alpha-D-ribose 1-diphosphate: step 4/9. The protein is 1-(5-phosphoribosyl)-5-[(5-phosphoribosylamino)methylideneamino] imidazole-4-carboxamide isomerase of Vibrio campbellii (strain ATCC BAA-1116).